Here is a 452-residue protein sequence, read N- to C-terminus: uncharacterized protein (452 aa).

Belongs to the HypE family.

This is an uncharacterized protein from Methanocaldococcus jannaschii (strain ATCC 43067 / DSM 2661 / JAL-1 / JCM 10045 / NBRC 100440) (Methanococcus jannaschii).